The chain runs to 329 residues: Chlorophyllase-1, chloroplastic (329 aa).

A chloroplast-targeting transit peptide spans M1–T21. The GXSXG signature appears at G145–G149. S147 serves as the catalytic Nucleophile. Residues D169 and H242 each act as charge relay system in the active site.

Belongs to the AB hydrolase superfamily. Lipase family.

It localises to the plastid. It is found in the chloroplast. The enzyme catalyses a chlorophyll + H2O = a chlorophyllide + phytol + H(+). It participates in porphyrin-containing compound metabolism; chlorophyll degradation. Its function is as follows. Catalyzes the hydrolysis of ester bond in chlorophyll to yield chlorophyllide and phytol. The protein is Chlorophyllase-1, chloroplastic (CHLASE1) of Citrus sinensis (Sweet orange).